We begin with the raw amino-acid sequence, 89 residues long: Small ribosomal subunit protein uS15 (89 aa).

Belongs to the universal ribosomal protein uS15 family. As to quaternary structure, part of the 30S ribosomal subunit. Forms a bridge to the 50S subunit in the 70S ribosome, contacting the 23S rRNA.

In terms of biological role, one of the primary rRNA binding proteins, it binds directly to 16S rRNA where it helps nucleate assembly of the platform of the 30S subunit by binding and bridging several RNA helices of the 16S rRNA. Its function is as follows. Forms an intersubunit bridge (bridge B4) with the 23S rRNA of the 50S subunit in the ribosome. This chain is Small ribosomal subunit protein uS15, found in Dictyoglomus turgidum (strain DSM 6724 / Z-1310).